Consider the following 430-residue polypeptide: ATP-dependent RNA helicase RhlB (430 aa).

Residues 9 to 37 (QKFSDFALHPQVIEALESKGFHYCTPIQA) carry the Q motif motif. The region spanning 40–219 (LPLTLSGRDV…FEQMNNAEYV (180 aa)) is the Helicase ATP-binding domain. 53–60 (AQTGTGKT) is an ATP binding site. The short motif at 165 to 168 (DEAD) is the DEAD box element. One can recognise a Helicase C-terminal domain in the interval 245–390 (RLLQTLLEEE…LSKYNSDALM (146 aa)). The segment at 392-430 (DLPAPKRLTRPPRSNNGPRRHNSAPRRSGAPRNNRKRAD) is disordered.

The protein belongs to the DEAD box helicase family. RhlB subfamily. In terms of assembly, component of the RNA degradosome, which is a multiprotein complex involved in RNA processing and mRNA degradation.

It localises to the cytoplasm. It catalyses the reaction ATP + H2O = ADP + phosphate + H(+). Its function is as follows. DEAD-box RNA helicase involved in RNA degradation. Has RNA-dependent ATPase activity and unwinds double-stranded RNA. The polypeptide is ATP-dependent RNA helicase RhlB (Pectobacterium atrosepticum (strain SCRI 1043 / ATCC BAA-672) (Erwinia carotovora subsp. atroseptica)).